The primary structure comprises 509 residues: Zinc finger protein Aiolos (509 aa).

Residues 1–19 show a composition bias toward polar residues; that stretch reads MEDIQTNAELKSTQEQSVP. Residues 1–86 are disordered; the sequence is MEDIQTNAEL…MGNAEEPEIP (86 aa). Phosphoserine is present on residues Ser22 and Ser42. Over residues 56-72 the composition is skewed to basic and acidic residues; that stretch reads DSMKVKDEYSERDENVL. Glycyl lysine isopeptide (Lys-Gly) (interchain with G-Cter in SUMO2) cross-links involve residues Lys61, Lys73, and Lys100. C2H2-type zinc fingers lie at residues 118–140, 146–168, and 174–196; these read MNCDVCGLSCISFNVLMVHKRSH, FQCNQCGASFTQKGNLLRHIKLH, and FKCHLCNYACQRRDALTGHLRTH. A C2H2-type 4; atypical zinc finger spans residues 202-224; that stretch reads YKCEFCGRSYKQRSSLEEHKERC. Lys245 is covalently cross-linked (Glycyl lysine isopeptide (Lys-Gly) (interchain with G-Cter in SUMO2)). Thr326 is subject to Phosphothreonine. Residues 364–394 are disordered; it reads IHLPEKSVPSERGLSPNNSGHDSTDTDSNHE. The residue at position 378 (Ser378) is a Phosphoserine. Residues 385-394 show a composition bias toward basic and acidic residues; the sequence is DSTDTDSNHE. The C2H2-type 5 zinc-finger motif lies at 452-474; it reads YRCDHCRVLFLDYVMFTIHMGCH. The interval 452 to 504 is mediates homodimerization and heterodimerization; the sequence is YRCDHCRVLFLDYVMFTIHMGCHGFRDPFECNMCGYRSHDRYEFSSHIARGEH. Residues 480–504 form a C2H2-type 6; atypical zinc finger; it reads FECNMCGYRSHDRYEFSSHIARGEH.

The protein belongs to the Ikaros C2H2-type zinc-finger protein family. As to quaternary structure, homodimer. Heterodimer with other IKAROS family members. Interacts with IKZF4 and IKZF5. Interacts with IKZF1. Interacts with HRAS. Interacts with FOXP3; this interaction may be required for silencing target genes and regulating the suppressive activity of FOXP3-positive regulatory T-cells (Treg). Interacts with BCL21L isoform Bcl-X(L); this interaction blocks the anti-apoptotic role of BCL21L. Associates with histone deacetylase complexes containing HDAC1, MTA2 and SIN3A. In terms of processing, phosphorylation on tyrosine residues induced by IL2 is required for dissociation from HRAS and nuclear translocation of IKZF3 in T-cells. Phosphorylation on tyrosine residues induced by IL4 is required for dissociation from Bcl-X(L) in T-cells. In terms of tissue distribution, expressed most strongly in peripheral blood leukocytes, the spleen, and the thymus.

It is found in the nucleus. The protein localises to the cytoplasm. Its function is as follows. Transcription factor that plays an important role in the regulation of lymphocyte differentiation. Plays an essential role in regulation of B-cell differentiation, proliferation and maturation to an effector state. Involved in regulating BCL2 expression and controlling apoptosis in T-cells in an IL2-dependent manner. The chain is Zinc finger protein Aiolos (IKZF3) from Homo sapiens (Human).